A 505-amino-acid chain; its full sequence is L-amino-acid oxidase (505 aa).

A signal peptide spans 1-18 (MNVFLMFSLLFLAALGSC). Residues Cys28 and Cys191 are joined by a disulfide bond. FAD-binding positions include 61–62 (MS), 81–82 (EA), Arg89, and 105–108 (GPMR). Position 108 (Arg108) interacts with substrate. N-linked (GlcNAc...) asparagine glycosylation occurs at Asn190. His241 contributes to the substrate binding site. Val279 contributes to the FAD binding site. The cysteines at positions 349 and 430 are disulfide-linked. Asn379 carries N-linked (GlcNAc...) asparagine glycosylation. Tyr390 contributes to the substrate binding site. FAD is bound by residues Glu475 and 482 to 487 (GWIDST). Position 482-483 (482-483 (GW)) interacts with substrate.

This sequence belongs to the flavin monoamine oxidase family. FIG1 subfamily. Monomer. This is in contrast with most of its orthologs, that are non-covalently linked homodimers. The cofactor is FAD. Post-translationally, N-glycosylated. Expressed by the venom gland.

The protein localises to the secreted. It carries out the reaction an L-alpha-amino acid + O2 + H2O = a 2-oxocarboxylate + H2O2 + NH4(+). The catalysed reaction is L-leucine + O2 + H2O = 4-methyl-2-oxopentanoate + H2O2 + NH4(+). Its function is as follows. Catalyzes an oxidative deamination of predominantly hydrophobic and aromatic L-amino acids, thus producing hydrogen peroxide that may contribute to the diverse toxic effects of this enzyme. Shows activity on L-Leu. Exhibits diverse biological activities, such as hemorrhage, edema, antibacterial and antiparasitic activities, as well as regulation of platelet aggregation. Effects of snake L-amino oxidases on platelets are controversial, since they either induce aggregation or inhibit agonist-induced aggregation. These different effects are probably due to different experimental conditions. This protein has an ability to induce hemolysis and apoptosis. The polypeptide is L-amino-acid oxidase (Protobothrops flavoviridis (Habu)).